The chain runs to 1358 residues: Phosphoinositide 3-kinase regulatory subunit 4 (1358 aa).

Gly-2 carries the N-myristoyl glycine lipid modification. One can recognise a Protein kinase domain in the interval 26–324; the sequence is FEYDKSLGST…AFPEIFYTFL (299 aa). ATP-binding positions include 32 to 40 and Lys-53; that span reads LGSTRFFKV. The Proton acceptor role is filled by Asp-148. 4 HEAT repeats span residues 413–450, 458–495, 572–610, and 612–648; these read ILLDRITPYLLHFSNDSVPRVRAEALRTLTKVLALVQE, IYPEYILPGIAHLAQDDATIVRLAYAENIALLAETALR, KANDVLLSHMITFLNDKNDWHLRGAFFDSIVGVAAYVGW, and SSSILKPLLQQGLSDAEEFVIVKALNALTCMCQLGLL. A phosphoserine mark is found at Ser-808, Ser-813, Ser-853, and Ser-865. WD repeat units follow at residues 991–1030, 1040–1079, 1093–1134, 1139–1178, 1182–1223, and 1237–1278; these read EHKSAVNRIRVSDEHLLFATCSNDGTVKIWNSQKMEGKTT, RIGGRVKTLTFCQGSHYLAIASDNGAVQLLGIEASKLPKS, KEDG…NAWT, LKSGLITSFAVDIHQCWLCIGTSSGAMACWDMRFQLPISS, PSRA…RRLT, and PSPH…RSYV. Positions 1307–1326 are disordered; the sequence is KQKVGPSDDTPRRGPESLPV. Positions 1315-1326 are enriched in basic and acidic residues; the sequence is DTPRRGPESLPV. The residue at position 1316 (Thr-1316) is a Phosphothreonine. The stretch at 1327 to 1358 is one WD 7 repeat; that stretch reads GHHDIITDIATFQTTQGFIVTASRDGIVKVWK.

It belongs to the protein kinase superfamily. Ser/Thr protein kinase family. As to quaternary structure, component of the PI3K (PI3KC3/PI3K-III/class III phosphatidylinositol 3-kinase) complex the core of which is composed of the catalytic subunit PIK3C3, the regulatory subunit PIK3R4 and BECN1 associating with additional regulatory/auxiliary subunits to form alternative complex forms. Alternative complex forms containing a fourth regulatory subunit in a mutually exclusive manner are PI3K complex I (PI3KC3-C1) containing ATG14, and PI3K complex II (PI3KC3-C2) containing UVRAG. PI3KC3-C1 displays a V-shaped architecture with PIK3R4 serving as a bridge between PIK3C3 and the ATG14:BECN1 subcomplex. Both, PI3KC3-C1 and PI3KC3-C2, can associate with further regulatory subunits, such as RUBCN, SH3GLB1/Bif-1, AMBRA1 and NRBF2. PI3KC3-C1 probably associates with PIK3CB. Interacts with RAB7A in the presence of PIK3C3/VPS34. Interacts with NRBF2. Interacts with ARMC3. Requires Mn(2+) as cofactor. Myristoylated. Post-translationally, probably autophosphorylated.

The protein localises to the late endosome. The protein resides in the cytoplasmic vesicle. It is found in the autophagosome. Its subcellular location is the membrane. It catalyses the reaction L-seryl-[protein] + ATP = O-phospho-L-seryl-[protein] + ADP + H(+). It carries out the reaction L-threonyl-[protein] + ATP = O-phospho-L-threonyl-[protein] + ADP + H(+). Regulatory subunit of the PI3K complex that mediates formation of phosphatidylinositol 3-phosphate; different complex forms are believed to play a role in multiple membrane trafficking pathways: PI3KC3-C1 is involved in initiation of autophagosomes and PI3KC3-C2 in maturation of autophagosomes and endocytosis. Involved in regulation of degradative endocytic trafficking and cytokinesis, probably in the context of PI3KC3-C2. This Mus musculus (Mouse) protein is Phosphoinositide 3-kinase regulatory subunit 4 (Pik3r4).